The following is a 399-amino-acid chain: Argininosuccinate synthase (399 aa).

Position 8–16 (8–16 (AYSGGLDTS)) interacts with ATP. Tyr87 provides a ligand contact to L-citrulline. Position 117 (Gly117) interacts with ATP. Positions 119, 123, and 124 each coordinate L-aspartate. Residue Asn123 coordinates L-citrulline. Residues Arg127, Ser175, Glu260, and Tyr272 each coordinate L-citrulline.

It belongs to the argininosuccinate synthase family. Type 1 subfamily. Homotetramer.

It localises to the cytoplasm. It carries out the reaction L-citrulline + L-aspartate + ATP = 2-(N(omega)-L-arginino)succinate + AMP + diphosphate + H(+). It functions in the pathway amino-acid biosynthesis; L-arginine biosynthesis; L-arginine from L-ornithine and carbamoyl phosphate: step 2/3. This chain is Argininosuccinate synthase, found in Mycolicibacterium smegmatis (strain ATCC 700084 / mc(2)155) (Mycobacterium smegmatis).